Reading from the N-terminus, the 844-residue chain is Fe(2+) transport protein A/Fe(2+) transporter FeoB fusion protein (844 aa).

The interval 1 to 73 (MRLSELHTGD…EDAAKIEVEL (73 aa)) is feoA. Positions 74–844 (ISSNATSSPA…LIYRIGILFF (771 aa)) are feoB. Over residues 79-106 (TSSPASNDIGEQSANPDSNESIPTNPTE) the composition is skewed to polar residues. The interval 79–110 (TSSPASNDIGEQSANPDSNESIPTNPTEDISA) is disordered. The region spanning 126 to 289 (VIRVALIGNP…FDTLISIHEG (164 aa)) is the FeoB-type G domain. GTP-binding positions include 133 to 140 (GNPNCGKT), 158 to 162 (GVTVE), 179 to 182 (DLPG), 240 to 243 (NMFD), and 269 to 271 (VGR). 8 helical membrane-spanning segments follow: residues 418-438 (VLGF…TFVL), 475-495 (IGGV…YFFI), 520-540 (LHGK…PAIM), 559-579 (PLMS…AFFP), 581-601 (SAGL…VLLA), 646-666 (MGSI…YPRY), 786-806 (IIAL…ATVV), and 817-837 (WAVF…FLIY).

The protein in the N-terminal section; belongs to the FeoA family. In the C-terminal section; belongs to the TRAFAC class TrmE-Era-EngA-EngB-Septin-like GTPase superfamily. FeoB GTPase (TC 9.A.8) family.

The protein localises to the cell inner membrane. In terms of biological role, probable transporter of a GTP-driven Fe(2+) uptake system. This is Fe(2+) transport protein A/Fe(2+) transporter FeoB fusion protein from Porphyromonas gingivalis (strain ATCC BAA-308 / W83).